Reading from the N-terminus, the 514-residue chain is 2-isopropylmalate synthase (514 aa).

One can recognise a Pyruvate carboxyltransferase domain in the interval 5–267; that stretch reads IYIFDTTLRD…HTDIVTEEIT (263 aa). Mn(2+) is bound by residues aspartate 14, histidine 202, histidine 204, and asparagine 238. Positions 392–514 are regulatory domain; it reads KLKYYQVFTG…SKDLQKISAN (123 aa).

This sequence belongs to the alpha-IPM synthase/homocitrate synthase family. LeuA type 1 subfamily. As to quaternary structure, homodimer. It depends on Mn(2+) as a cofactor.

Its subcellular location is the cytoplasm. The enzyme catalyses 3-methyl-2-oxobutanoate + acetyl-CoA + H2O = (2S)-2-isopropylmalate + CoA + H(+). It participates in amino-acid biosynthesis; L-leucine biosynthesis; L-leucine from 3-methyl-2-oxobutanoate: step 1/4. Functionally, catalyzes the condensation of the acetyl group of acetyl-CoA with 3-methyl-2-oxobutanoate (2-ketoisovalerate) to form 3-carboxy-3-hydroxy-4-methylpentanoate (2-isopropylmalate). The chain is 2-isopropylmalate synthase from Clostridium kluyveri (strain NBRC 12016).